We begin with the raw amino-acid sequence, 155 residues long: Methylated-DNA--protein-cysteine methyltransferase (155 aa).

The Nucleophile; methyl group acceptor role is filled by C119.

Belongs to the MGMT family.

It is found in the cytoplasm. It carries out the reaction a 6-O-methyl-2'-deoxyguanosine in DNA + L-cysteinyl-[protein] = S-methyl-L-cysteinyl-[protein] + a 2'-deoxyguanosine in DNA. It catalyses the reaction a 4-O-methyl-thymidine in DNA + L-cysteinyl-[protein] = a thymidine in DNA + S-methyl-L-cysteinyl-[protein]. In terms of biological role, involved in the cellular defense against the biological effects of O6-methylguanine (O6-MeG) and O4-methylthymine (O4-MeT) in DNA. Repairs the methylated nucleobase in DNA by stoichiometrically transferring the methyl group to a cysteine residue in the enzyme. This is a suicide reaction: the enzyme is irreversibly inactivated. The chain is Methylated-DNA--protein-cysteine methyltransferase from Sulfolobus acidocaldarius (strain ATCC 33909 / DSM 639 / JCM 8929 / NBRC 15157 / NCIMB 11770).